The following is a 116-amino-acid chain: Transmembrane protein 213 (116 aa).

Positions 1 to 35 (MAQSGVFLRNPGHLTSAPQAALLFSLVLTSFHLSC) are cleaved as a signal peptide. The Extracellular segment spans residues 36–79 (GTETSSSNSTLSAHHPDPGTLEQCANVDFCPLASLCCRASVDEY). Residues 80-100 (GWIAAAVGWSFWFLTLILLCV) traverse the membrane as a helical segment. Residues 101–116 (DKLMKLTPEEPKDLAA) lie on the Cytoplasmic side of the membrane.

It is found in the membrane. This Mus musculus (Mouse) protein is Transmembrane protein 213 (Tmem213).